Here is a 471-residue protein sequence, read N- to C-terminus: Coronin-6 (471 aa).

5 WD repeats span residues 79–119 (GHTG…PVRN), 129–169 (GHSK…VLLS), 173–212 (IHPD…VVAE), 216–259 (PHEG…EPVA), and 264–304 (DTSN…PFVH). The segment at 410–433 (ILDVRPPASPRRSQSASEAPLSQH) is disordered. Residues 419–429 (PRRSQSASEAP) are compositionally biased toward low complexity. Positions 426-468 (SEAPLSQHTLETLLEEIKALRDRVQAQEERITALENMLCELVD) form a coiled coil.

This is Coronin-6 (Coro6) from Mus musculus (Mouse).